We begin with the raw amino-acid sequence, 322 residues long: TATA box-binding protein-like 2 (322 aa).

The segment at 31–54 (PALSSTQDSTYLSGRAGPSRESGA) is disordered. Residues 32–42 (ALSSTQDSTYL) are compositionally biased toward polar residues.

The protein belongs to the TBP family.

It is found in the nucleus. Its function is as follows. TATA box-binding transcription factor. Members of the TBP family are differentially required to regulate transcription and development during early embryogenesis. This Takifugu rubripes (Japanese pufferfish) protein is TATA box-binding protein-like 2.